We begin with the raw amino-acid sequence, 313 residues long: tRNA dimethylallyltransferase (313 aa).

10–17 (GPTAVGKT) is an ATP binding site. Position 12–17 (12–17 (TAVGKT)) interacts with substrate. An interaction with substrate tRNA region spans residues 35–38 (DSMQ).

The protein belongs to the IPP transferase family. In terms of assembly, monomer. It depends on Mg(2+) as a cofactor.

It catalyses the reaction adenosine(37) in tRNA + dimethylallyl diphosphate = N(6)-dimethylallyladenosine(37) in tRNA + diphosphate. Its function is as follows. Catalyzes the transfer of a dimethylallyl group onto the adenine at position 37 in tRNAs that read codons beginning with uridine, leading to the formation of N6-(dimethylallyl)adenosine (i(6)A). In Alkaliphilus oremlandii (strain OhILAs) (Clostridium oremlandii (strain OhILAs)), this protein is tRNA dimethylallyltransferase.